We begin with the raw amino-acid sequence, 213 residues long: ATP synthase peripheral stalk subunit OSCP, mitochondrial (213 aa).

The N-terminal 23 residues, 1–23 (MASQAVSGLSRQVRCFSTSVVRP), are a transit peptide targeting the mitochondrion. Positions 5–23 (AVSGLSRQVRCFSTSVVRP) match the SIFI-degron motif. N6-acetyllysine occurs at positions 54, 60, 70, and 73. Residue Lys90 is modified to N6-succinyllysine. Residues Lys100, Lys158, and Lys162 each carry the N6-acetyllysine; alternate modification. 3 positions are modified to N6-succinyllysine; alternate: Lys100, Lys158, and Lys162. N6-acetyllysine is present on residues Lys172, Lys176, and Lys192. Lys199 is modified (N6-succinyllysine).

The protein belongs to the ATPase delta chain family. As to quaternary structure, component of the ATP synthase complex composed at least of ATP5F1A/subunit alpha, ATP5F1B/subunit beta, ATP5MC1/subunit c (homooctomer), MT-ATP6/subunit a, MT-ATP8/subunit 8, ATP5ME/subunit e, ATP5MF/subunit f, ATP5MG/subunit g, ATP5MK/subunit k, ATP5MJ/subunit j, ATP5F1C/subunit gamma, ATP5F1D/subunit delta, ATP5F1E/subunit epsilon, ATP5PF/subunit F6, ATP5PB/subunit b, ATP5PD/subunit d, ATP5PO/subunit OSCP. ATP synthase complex consists of a soluble F(1) head domain (subunits alpha(3) and beta(3)) - the catalytic core - and a membrane F(0) domain - the membrane proton channel (subunits c, a, 8, e, f, g, k and j). These two domains are linked by a central stalk (subunits gamma, delta, and epsilon) rotating inside the F1 region and a stationary peripheral stalk (subunits F6, b, d, and OSCP). Acetylation at Lys-162 decreases ATP production. Deacetylated by SIRT3. In terms of processing, in response to mitochondrial stress, the precursor protein is ubiquitinated by the SIFI complex in the cytoplasm before mitochondrial import, leading to its degradation. Within the SIFI complex, UBR4 initiates ubiquitin chain that are further elongated or branched by KCMF1.

The protein localises to the mitochondrion. It is found in the mitochondrion inner membrane. In terms of biological role, subunit OSCP, of the mitochondrial membrane ATP synthase complex (F(1)F(0) ATP synthase or Complex V) that produces ATP from ADP in the presence of a proton gradient across the membrane which is generated by electron transport complexes of the respiratory chain. ATP synthase complex consist of a soluble F(1) head domain - the catalytic core - and a membrane F(1) domain - the membrane proton channel. These two domains are linked by a central stalk rotating inside the F(1) region and a stationary peripheral stalk. During catalysis, ATP synthesis in the catalytic domain of F(1) is coupled via a rotary mechanism of the central stalk subunits to proton translocation. In vivo, can only synthesize ATP although its ATP hydrolase activity can be activated artificially in vitro. Part of the complex F(0) domain. Part of the complex F(0) domain and the peripheric stalk, which acts as a stator to hold the catalytic alpha(3)beta(3) subcomplex and subunit a/ATP6 static relative to the rotary elements. This chain is ATP synthase peripheral stalk subunit OSCP, mitochondrial, found in Sus scrofa (Pig).